We begin with the raw amino-acid sequence, 349 residues long: tRNA N6-adenosine threonylcarbamoyltransferase (349 aa).

The Fe cation site is built by His114 and His118. Substrate is bound by residues 136 to 140 (IMSGG), Asp169, Gly182, and Asn280. Residue Asp308 coordinates Fe cation.

This sequence belongs to the KAE1 / TsaD family. Fe(2+) is required as a cofactor.

It is found in the cytoplasm. The enzyme catalyses L-threonylcarbamoyladenylate + adenosine(37) in tRNA = N(6)-L-threonylcarbamoyladenosine(37) in tRNA + AMP + H(+). Its function is as follows. Required for the formation of a threonylcarbamoyl group on adenosine at position 37 (t(6)A37) in tRNAs that read codons beginning with adenine. Is involved in the transfer of the threonylcarbamoyl moiety of threonylcarbamoyl-AMP (TC-AMP) to the N6 group of A37, together with TsaE and TsaB. TsaD likely plays a direct catalytic role in this reaction. The protein is tRNA N6-adenosine threonylcarbamoyltransferase of Ehrlichia chaffeensis (strain ATCC CRL-10679 / Arkansas).